A 323-amino-acid polypeptide reads, in one-letter code: HPr kinase/phosphorylase (323 aa).

Active-site residues include H142 and K163. 157–164 provides a ligand contact to ATP; the sequence is GESGVGKS. S164 is a Mg(2+) binding site. D181 (proton acceptor; for phosphorylation activity. Proton donor; for dephosphorylation activity) is an active-site residue. The tract at residues 205 to 214 is important for the catalytic mechanism of both phosphorylation and dephosphorylation; that stretch reads LEVRGLGMLN. E206 lines the Mg(2+) pocket. The active site involves R249. The segment at 270–275 is important for the catalytic mechanism of dephosphorylation; sequence PVAAGR.

Belongs to the HPrK/P family. In terms of assembly, homohexamer. Mg(2+) is required as a cofactor.

It catalyses the reaction [HPr protein]-L-serine + ATP = [HPr protein]-O-phospho-L-serine + ADP + H(+). It carries out the reaction [HPr protein]-O-phospho-L-serine + phosphate + H(+) = [HPr protein]-L-serine + diphosphate. Functionally, catalyzes the ATP- as well as the pyrophosphate-dependent phosphorylation of a specific serine residue in HPr, a phosphocarrier protein of the phosphoenolpyruvate-dependent sugar phosphotransferase system (PTS). HprK/P also catalyzes the pyrophosphate-producing, inorganic phosphate-dependent dephosphorylation (phosphorolysis) of seryl-phosphorylated HPr (P-Ser-HPr). The chain is HPr kinase/phosphorylase from Nitrosomonas europaea (strain ATCC 19718 / CIP 103999 / KCTC 2705 / NBRC 14298).